The primary structure comprises 276 residues: Octanoyltransferase LipM (276 aa).

A BPL/LPL catalytic domain is found at 32-247 (GALPPVIRFY…GFEKGLDIKL (216 aa)). The Acyl-thioester intermediate role is filled by cysteine 149.

The protein belongs to the octanoyltransferase LipM family. As to quaternary structure, monomer.

It carries out the reaction octanoyl-[ACP] + L-lysyl-[protein] = N(6)-octanoyl-L-lysyl-[protein] + holo-[ACP] + H(+). It participates in protein modification; protein lipoylation via endogenous pathway; protein N(6)-(lipoyl)lysine from octanoyl-[acyl-carrier-protein]. Its function is as follows. Catalyzes the transfer of endogenously produced octanoic acid from octanoyl-acyl-carrier-protein onto the lipoyl domain of GcvH, an intermediate carrier during protein lipoylation. This chain is Octanoyltransferase LipM, found in Macrococcus caseolyticus (strain JCSC5402) (Macrococcoides caseolyticum).